Here is a 183-residue protein sequence, read N- to C-terminus: Guanylate kinase (183 aa).

Residues G4–F182 enclose the Guanylate kinase-like domain. G11–G18 serves as a coordination point for ATP.

Belongs to the guanylate kinase family.

The protein resides in the cytoplasm. The enzyme catalyses GMP + ATP = GDP + ADP. It carries out the reaction dZMP + ATP = dZDP + ADP. The protein operates within purine metabolism. Its function is as follows. Essential for recycling GMP and indirectly, cGMP. In terms of biological role, (Microbial infection) Catalyzes the phosphorylation of dZMP to dZDP, when the bacterium is infected by a phage that produces the substrate for the synthesis of dZTP (2- amino-2'-deoxyadenosine 5'-triphosphate), which is then used by the phage as a DNA polymerase substrate. In Synechococcus sp. (strain ATCC 27144 / PCC 6301 / SAUG 1402/1) (Anacystis nidulans), this protein is Guanylate kinase.